The primary structure comprises 344 residues: Arginine N-succinyltransferase (344 aa).

Leu-125 serves as a coordination point for succinyl-CoA. The active-site Proton donor is His-229.

This sequence belongs to the arginine N-succinyltransferase family.

The catalysed reaction is succinyl-CoA + L-arginine = N(2)-succinyl-L-arginine + CoA + H(+). The protein operates within amino-acid degradation; L-arginine degradation via AST pathway; L-glutamate and succinate from L-arginine: step 1/5. Its function is as follows. Catalyzes the transfer of succinyl-CoA to arginine to produce N(2)-succinylarginine. The chain is Arginine N-succinyltransferase from Escherichia coli O17:K52:H18 (strain UMN026 / ExPEC).